A 275-amino-acid chain; its full sequence is Dermonecrotic toxin SpaSicTox-betaIIA1 (275 aa).

Histidine 5 is an active-site residue. The Mg(2+) site is built by glutamate 25 and aspartate 27. Histidine 41 acts as the Nucleophile in catalysis. Cystine bridges form between cysteine 45-cysteine 51 and cysteine 47-cysteine 190. Aspartate 85 provides a ligand contact to Mg(2+).

This sequence belongs to the arthropod phospholipase D family. Class II subfamily. Requires Mg(2+) as cofactor. Expressed by the venom gland.

The protein resides in the secreted. The catalysed reaction is an N-(acyl)-sphingosylphosphocholine = an N-(acyl)-sphingosyl-1,3-cyclic phosphate + choline. The enzyme catalyses an N-(acyl)-sphingosylphosphoethanolamine = an N-(acyl)-sphingosyl-1,3-cyclic phosphate + ethanolamine. It carries out the reaction a 1-acyl-sn-glycero-3-phosphocholine = a 1-acyl-sn-glycero-2,3-cyclic phosphate + choline. It catalyses the reaction a 1-acyl-sn-glycero-3-phosphoethanolamine = a 1-acyl-sn-glycero-2,3-cyclic phosphate + ethanolamine. Its function is as follows. Dermonecrotic toxins cleave the phosphodiester linkage between the phosphate and headgroup of certain phospholipids (sphingolipid and lysolipid substrates), forming an alcohol (often choline) and a cyclic phosphate. This toxin acts on sphingomyelin (SM). It may also act on ceramide phosphoethanolamine (CPE), lysophosphatidylcholine (LPC) and lysophosphatidylethanolamine (LPE), but not on lysophosphatidylserine (LPS), and lysophosphatidylglycerol (LPG). It acts by transphosphatidylation, releasing exclusively cyclic phosphate products as second products. Induces dermonecrosis, hemolysis, increased vascular permeability, edema, inflammatory response, and platelet aggregation. This chain is Dermonecrotic toxin SpaSicTox-betaIIA1, found in Sicarius patagonicus (Six-eyed sand spider).